Reading from the N-terminus, the 246-residue chain is tRNA (guanine-N(7)-)-methyltransferase (246 aa).

The disordered stretch occupies residues 1-23 (MIESSSPTPPALHEGAPADVSHP). 4 residues coordinate S-adenosyl-L-methionine: Glu-75, Glu-100, Asp-127, and Asp-150. Residue Asp-150 is part of the active site. A substrate-binding site is contributed by Lys-154. Residues 156-161 (KHNKRR) are interaction with RNA. Residues Asp-186 and 225–228 (TKFE) contribute to the substrate site.

It belongs to the class I-like SAM-binding methyltransferase superfamily. TrmB family.

It catalyses the reaction guanosine(46) in tRNA + S-adenosyl-L-methionine = N(7)-methylguanosine(46) in tRNA + S-adenosyl-L-homocysteine. It participates in tRNA modification; N(7)-methylguanine-tRNA biosynthesis. Catalyzes the formation of N(7)-methylguanine at position 46 (m7G46) in tRNA. This chain is tRNA (guanine-N(7)-)-methyltransferase, found in Polaromonas naphthalenivorans (strain CJ2).